We begin with the raw amino-acid sequence, 365 residues long: Anthranilate phosphoribosyltransferase (365 aa).

5-phospho-alpha-D-ribose 1-diphosphate is bound by residues glycine 96, 99 to 100, threonine 104, 106 to 109, 124 to 132, and serine 136; these read GD, NIST, and KHGNRSVSS. Residue glycine 96 participates in anthranilate binding. Serine 108 provides a ligand contact to Mg(2+). Asparagine 127 lines the anthranilate pocket. Arginine 182 serves as a coordination point for anthranilate. Aspartate 240 and glutamate 241 together coordinate Mg(2+).

The protein belongs to the anthranilate phosphoribosyltransferase family. As to quaternary structure, homodimer. Mg(2+) serves as cofactor.

The catalysed reaction is N-(5-phospho-beta-D-ribosyl)anthranilate + diphosphate = 5-phospho-alpha-D-ribose 1-diphosphate + anthranilate. Its pathway is amino-acid biosynthesis; L-tryptophan biosynthesis; L-tryptophan from chorismate: step 2/5. In terms of biological role, catalyzes the transfer of the phosphoribosyl group of 5-phosphorylribose-1-pyrophosphate (PRPP) to anthranilate to yield N-(5'-phosphoribosyl)-anthranilate (PRA). In Colwellia psychrerythraea (strain 34H / ATCC BAA-681) (Vibrio psychroerythus), this protein is Anthranilate phosphoribosyltransferase.